A 139-amino-acid polypeptide reads, in one-letter code: D-ribose pyranase (139 aa).

The Proton donor role is filled by His-20. Substrate is bound by residues Asp-28, His-106, and 128–130; that span reads YAN.

The protein belongs to the RbsD / FucU family. RbsD subfamily. In terms of assembly, homodecamer.

It is found in the cytoplasm. The enzyme catalyses beta-D-ribopyranose = beta-D-ribofuranose. Its pathway is carbohydrate metabolism; D-ribose degradation; D-ribose 5-phosphate from beta-D-ribopyranose: step 1/2. In terms of biological role, catalyzes the interconversion of beta-pyran and beta-furan forms of D-ribose. The sequence is that of D-ribose pyranase from Citrobacter koseri (strain ATCC BAA-895 / CDC 4225-83 / SGSC4696).